The sequence spans 840 residues: Protein translocase subunit SecA (840 aa).

ATP contacts are provided by residues glutamine 85, 103-107 (GEGKT), and aspartate 492. A disordered region spans residues 787 to 821 (QRERVAKETGASHGGDSQEIKKKPVKKEPKVGRND). Residues 802-819 (DSQEIKKKPVKKEPKVGR) show a composition bias toward basic and acidic residues. The Zn(2+) site is built by cysteine 823, cysteine 825, cysteine 834, and cysteine 835.

It belongs to the SecA family. In terms of assembly, monomer and homodimer. Part of the essential Sec protein translocation apparatus which comprises SecA, SecYEG and auxiliary proteins SecDF. Other proteins may also be involved. Zn(2+) serves as cofactor.

It is found in the cell membrane. Its subcellular location is the cytoplasm. The catalysed reaction is ATP + H2O + cellular proteinSide 1 = ADP + phosphate + cellular proteinSide 2.. Its function is as follows. Part of the Sec protein translocase complex. Interacts with the SecYEG preprotein conducting channel. Has a central role in coupling the hydrolysis of ATP to the transfer of proteins into and across the cell membrane, serving as an ATP-driven molecular motor driving the stepwise translocation of polypeptide chains across the membrane. The sequence is that of Protein translocase subunit SecA from Clostridium perfringens (strain SM101 / Type A).